The chain runs to 385 residues: 8-amino-7-oxononanoate synthase (385 aa).

Residue arginine 21 participates in substrate binding. A pyridoxal 5'-phosphate-binding site is contributed by 108 to 109 (GF). Substrate is bound at residue histidine 133. Pyridoxal 5'-phosphate contacts are provided by serine 179, histidine 207, and threonine 233. N6-(pyridoxal phosphate)lysine is present on lysine 236. Threonine 352 contributes to the substrate binding site.

Belongs to the class-II pyridoxal-phosphate-dependent aminotransferase family. BioF subfamily. In terms of assembly, homodimer. It depends on pyridoxal 5'-phosphate as a cofactor.

The enzyme catalyses 6-carboxyhexanoyl-[ACP] + L-alanine + H(+) = (8S)-8-amino-7-oxononanoate + holo-[ACP] + CO2. Its pathway is cofactor biosynthesis; biotin biosynthesis. In terms of biological role, catalyzes the decarboxylative condensation of pimeloyl-[acyl-carrier protein] and L-alanine to produce 8-amino-7-oxononanoate (AON), [acyl-carrier protein], and carbon dioxide. The chain is 8-amino-7-oxononanoate synthase from Salmonella dublin (strain CT_02021853).